Reading from the N-terminus, the 178-residue chain is CASP-like protein 5A1 (178 aa).

The segment at 1 to 24 is disordered; sequence MFASRPAVHPVEAPPPTDPVEQPT. Topologically, residues 1-37 are cytoplasmic; it reads MFASRPAVHPVEAPPPTDPVEQPTGVLMKDLPGMPGT. The helical transmembrane segment at 38-58 threads the bilayer; the sequence is AGGLGLRVAQFVFAGVALAVM. Residues 59–69 lie on the Extracellular side of the membrane; sequence ASTSDFPSVTA. Residues 70-90 form a helical membrane-spanning segment; that stretch reads FCYLVAATIMQCLWSFSLAIV. Residues 91–105 are Cytoplasmic-facing; that stretch reads DIYALLVKRCLRNRR. A helical membrane pass occupies residues 106 to 126; sequence AVCLFAIGDGITAALTFGAAC. Residues 127 to 152 lie on the Extracellular side of the membrane; that stretch reads SSAGITVLIDNDLNICAENHCGSFKT. Residues 153–173 form a helical membrane-spanning segment; it reads ATALAFMSWFALTPSFLLNFW. Topologically, residues 174–178 are cytoplasmic; it reads SMAAR.

It belongs to the Casparian strip membrane proteins (CASP) family. Homodimer and heterodimers.

The protein resides in the cell membrane. The polypeptide is CASP-like protein 5A1 (Brachypodium distachyon (Purple false brome)).